The sequence spans 500 residues: MNDFPWLTIIVVFPISAGSLMLFLPHRGNKVNKWYTICICILELLLTTYAFCYNFKMDDPLIQLSEDYKWINFFDFYWRMGIDGLSIGTILLTGFITTLATLAAFPVTRDSRLFHFLMLAMYSGQIGSFSSRDLLLFFIMWELELIPVYLLLSMWGGKKRLYSATKFILYTAGSSIFLLIGVLGISLYGSNEPTLNLELLANQSYPVTLEILFYIAFLIAFAVKSPIIPLHTWLPDTHGEAHYSTCMLLAGILLKMGAYGLVRINMELLPHAHSMFSPWLMVVGTIQIIYAASTSPGQRNLKKRIAYSSVSHMGFIIIGISSITDPGLNGAILQIISHGFIGAALFFLAGTSYDRIRLVYLDEMGGMAISIPKIFTMFTILSMASLALPGMSGFVAELIVFFGIITSQKYFLISKILIIFVMAIGMILTPIYLLSMSRQMFYGYKLINVKNFSFFDSGPRELFLSISILLPIIGIGIYPDFVLSLASDKVESILSNYFYG.

14 helical membrane-spanning segments follow: residues 4–24 (FPWL…MLFL), 35–55 (YTIC…CYNF), 87–107 (IGTI…AFPV), 113–130 (LFHF…GSFS), 134–154 (LLLF…LLSM), 167–187 (FILY…GISL), 211–231 (ILFY…IPLH), 242–262 (HYST…YGLV), 272–292 (AHSM…IYAA), 305–325 (IAYS…SITD), 330–350 (GAIL…FLAG), 386–406 (LALP…GIIT), 416–436 (ILII…LLSM), and 462–482 (LFLS…PDFV).

The protein belongs to the complex I subunit 4 family.

The protein resides in the plastid. It localises to the chloroplast thylakoid membrane. The catalysed reaction is a plastoquinone + NADH + (n+1) H(+)(in) = a plastoquinol + NAD(+) + n H(+)(out). It carries out the reaction a plastoquinone + NADPH + (n+1) H(+)(in) = a plastoquinol + NADP(+) + n H(+)(out). This Olimarabidopsis pumila (Dwarf rocket) protein is NAD(P)H-quinone oxidoreductase chain 4, chloroplastic.